The following is a 283-amino-acid chain: Cyclin-C (283 aa).

A Cyclin N-terminal domain is found at 20–151 (DLLKERQKDL…LLELMDCCLI (132 aa)). Residues 252–283 (TILSKMPKPKPPPNSEGEQGPNGSQNSSYSQS) are disordered. The span at 272–283 (PNGSQNSSYSQS) shows a compositional bias: polar residues. The residue at position 275 (serine 275) is a Phosphoserine.

Belongs to the cyclin family. Cyclin C subfamily. As to quaternary structure, component of the Mediator complex, which is composed of MED1, MED4, MED6, MED7, MED8, MED9, MED10, MED11, MED12, MED13, MED13L, MED14, MED15, MED16, MED17, MED18, MED19, MED20, MED21, MED22, MED23, MED24, MED25, MED26, MED27, MED29, MED30, MED31, CCNC, CDK8 and CDC2L6/CDK11. The MED12, MED13, CCNC and CDK8 subunits form a distinct module termed the CDK8 module. Mediator containing the CDK8 module is less active than Mediator lacking this module in supporting transcriptional activation. Individual preparations of the Mediator complex lacking one or more distinct subunits have been variously termed ARC, CRSP, DRIP, PC2, SMCC and TRAP. The cylin/CDK pair formed by CCNC/CDK8 also associates with the large subunit of RNA polymerase II.

Its subcellular location is the nucleus. Its function is as follows. Component of the Mediator complex, a coactivator involved in regulated gene transcription of nearly all RNA polymerase II-dependent genes. Mediator functions as a bridge to convey information from gene-specific regulatory proteins to the basal RNA polymerase II transcription machinery. Mediator is recruited to promoters by direct interactions with regulatory proteins and serves as a scaffold for the assembly of a functional preinitiation complex with RNA polymerase II and the general transcription factors. Binds to and activates cyclin-dependent kinase CDK8 that phosphorylates the CTD (C-terminal domain) of the large subunit of RNA polymerase II (RNAp II), which may inhibit the formation of a transcription initiation complex. The protein is Cyclin-C (Ccnc) of Mus musculus (Mouse).